A 784-amino-acid polypeptide reads, in one-letter code: MAASSMSSLTSSYHTTAMPSSNSVVPPFDARNLEIKTKSIEQTLIPLVTQITTLVNYKESYMASGKPKSERAMRAALKIGSAVEAAIERFVCVGETIADENADIQPEMYDACTEARLAGASMANLSCACNDDPNSVVDKAVLVRASRQLLSSVTRVLLLADRVLVKQVLRAEDKIAFSLSRLESTRSFNDFVKVFAVFGGEMVELAHRSGDRQHDLKSEKRKAQMSIARTSLERLTMLLLTASKTYLRHPDCDSALQCRDGVFYQMKLSLELIAICVCDGILTTEKSRYIQDEPDMPIDIALQLTANAAIKQLTEMLEMIRMTVRVGAGVRERIVSALDALCQLTQDFTDSAYTPHHQREQILDFLEECRFEMTNLIQPDENEQLAASGLEVTVERLNRRLKDLSKQLQIVAMEQISEVLRANEDQVLLSSMKACAVSGDIDGVEKYMHKFREHADHMQEVCRLLHHISITDALHVHTGHVERNMRALAPLTILAGRTLCVHPSSRIARENLEVFCDTWGQAVNDLSRVAKESDVAANGRVAAEKQAYMSLPRPGKHGTTQKPSKPITLDVEDQQKMAKVGLEMKLLTSEVDAEAEKWDEYAENDIVKRAKAMSSMAYNMYLFTRGDGPLKTTHDLFTQAEFFAEQANQMYRTVREFSYEVPGSAEKSDLSAILERIPLHCQQLQVMVKSPTVGKTATFGKVDSVIQETKNLMNEIAKLVTASFVCATKYEIEFRGGSVNGRTGADGERTSRESTVWRRTPSIRRAAPPTSSHLSANNSSSIHI.

The segment at I35–L247 is vinculin/alpha-catenin homology 1 (VH1) region. Residues A387 to E414 are a coiled coil. The vinculin/alpha-catenin homology 2 (VH2) region stretch occupies residues P552–T696. The segment at G737–I784 is disordered. A compositionally biased stretch (basic and acidic residues) spans A745–V756. Positions S771–I784 are enriched in low complexity.

This sequence belongs to the vinculin/alpha-catenin family. In terms of assembly, interacts with slo-1 (via C-terminus); the interaction is required for localization of slo-1 to dense bodies in body wall muscle cells. Interacts (via N-terminus) with dystrophin complex member dyb-1 (via C-terminus); the interaction is required for localization of the dystrophin complex and ctn-1 near dense bodies in muscle cells. As to expression, expressed in body wall muscles, vulval muscles, stomatointestinal cells and pharyngeal muscle cells. Expressed in enteric muscles, nerve ring neurons and in the ventral nerve cord.

The protein resides in the cytoplasm. Required for slo-1 potassium ion channel clustering at presynaptic terminals and in egg-laying muscles; clustering of slo-1 mediates the intoxicating and sedatory effects of ethanol on worms. Required for slo-1 localization to dense bodies in body wall muscle cells. Maintains the localization of the dystrophin complex near muscle cell dense bodies via its interaction with complex member dyb-1 which is required for slo-1 localization in muscle while slo-1 localization in neurons is independent of the dystrophin complex. The chain is Alpha-catulin from Caenorhabditis elegans.